Consider the following 162-residue polypeptide: Large ribosomal subunit protein uL15 (162 aa).

The disordered stretch occupies residues 1-44; sequence MKLNELRDNPGATKNRIRVGRGIGSGKGKTAGRGVKGQKSREGV. The segment covering 21–35 has biased composition (gly residues); the sequence is RGIGSGKGKTAGRGV.

It belongs to the universal ribosomal protein uL15 family. In terms of assembly, part of the 50S ribosomal subunit.

Binds to the 23S rRNA. This is Large ribosomal subunit protein uL15 from Rhodospirillum rubrum (strain ATCC 11170 / ATH 1.1.1 / DSM 467 / LMG 4362 / NCIMB 8255 / S1).